Here is a 268-residue protein sequence, read N- to C-terminus: MEDFLLSNGYQLGKTIGEGTYSKVKEAFSKKHQRKVAIKVIDKMGGPEEFIQRFLPRELQIVRTLDHKNIIQVYEMLESADGKICLVMELAEGGDVFDCVLNGGPLPESRAKALFRQMVEAIRYCHGCGVAHRDLKCENALLQGFNLKLTDFGFAKVLPKSHRELSQTFCGSTAYAAPEVLQGIPHDSKKGDVWSMGVVLYVMLCASLPFDDTDIPKMLWQQQKGVSFPTHLSISADCQDLLKRLLEPDMILRPSIEEVSWHPWLAST.

The Protein kinase domain occupies 10–265; sequence YQLGKTIGEG…IEEVSWHPWL (256 aa). Residues 16–24 and K39 each bind ATP; that span reads IGEGTYSKV. Catalysis depends on D134, which acts as the Proton acceptor. The residue at position 166 (S166) is a Phosphoserine. T168 is subject to Phosphothreonine.

Belongs to the protein kinase superfamily. CAMK Ser/Thr protein kinase family. Requires Mg(2+) as cofactor. The cofactor is Mn(2+). Post-translationally, autophosphorylated at Ser-166. Phosphorylation at Thr-168 by PDPK1 activates the serine/threonine protein kinase activity.

It is found in the cell projection. The protein localises to the cilium. Its subcellular location is the flagellum. The enzyme catalyses L-seryl-[protein] + ATP = O-phospho-L-seryl-[protein] + ADP + H(+). The catalysed reaction is L-threonyl-[protein] + ATP = O-phospho-L-threonyl-[protein] + ADP + H(+). Activated by phosphorylation on Thr-168 by PDPK1. Its function is as follows. Serine/threonine protein kinase required for spermatid development and male fertility. This Homo sapiens (Human) protein is Testis-specific serine/threonine-protein kinase 3.